The primary structure comprises 286 residues: MEDKRRRARVQGAWAGPAKSQATAQPAPTAENNLQQRPGKAWMNKEQHLSDRQFVFKEPQEGVRRAPEPRVIEKEGVYEISMSPTGISRVCLCPGFVDLKEADSVFEQLCRDVPWKQRTGIRDDVTYQQPRLTAWYGELPYTYSRITMEPNPHWHPVLLMLKNQIEENTGHSFNSLLCNLYRNEKDSVDWHSDDEPSLGRCPIIASLSFGATRMFEMRKKPPPEDNGDYTYVERVKIPLDHGTLLIMEGATQADWQHRVPKEYHSREPRINLTFRTVYPDPRGAHW.

The disordered stretch occupies residues 1–38 (MEDKRRRARVQGAWAGPAKSQATAQPAPTAENNLQQRP). The segment covering 20-36 (SQATAQPAPTAENNLQQ) has biased composition (polar residues). Residues W115 and 141–143 (YTY) contribute to the substrate site. The region spanning 172–278 (SFNSLLCNLY…RINLTFRTVY (107 aa)) is the Fe2OG dioxygenase domain. L177 carries the post-translational modification (4R)-5-hydroxyleucine; alternate. (4R)-5-oxoleucine; alternate is present on L177. 179-181 (NLY) contacts 2-oxoglutarate. 2 residues coordinate Fe cation: H191 and D193. Substrate is bound at residue D194. H257 serves as a coordination point for Fe cation. Residues 269–275 (RINLTFR) and R275 each bind 2-oxoglutarate.

The protein belongs to the alkB family. Interacts with the ASCC complex composed of ASCC1, ASCC2 and ASCC3. Interacts directly with ASCC3, and is thereby recruited to the ASCC complex. Interacts with OTUD4; the interaction is direct. Interacts with USP7 and USP9X. Requires Fe(2+) as cofactor. In terms of processing, ubiquitinated; undergoes 'Lys-48'-linked polyubiquitination. OTUD4 promotes USP7 and USP9X-dependent deubiquitination of 'Lys-48'-polyubiquitinated ALKBH3 promoting the repair of alkylated DNA lesions.

The protein resides in the nucleus. It localises to the cytoplasm. The enzyme catalyses an N(1)-methyladenosine in mRNA + 2-oxoglutarate + O2 = an adenosine in mRNA + formaldehyde + succinate + CO2. It catalyses the reaction a methylated nucleobase within DNA + 2-oxoglutarate + O2 = a nucleobase within DNA + formaldehyde + succinate + CO2. It carries out the reaction an N(1)-methyl-2'-deoxyadenosine in single-stranded DNA + 2-oxoglutarate + O2 = a 2'-deoxyadenosine in single-stranded DNA + formaldehyde + succinate + CO2 + H(+). The catalysed reaction is an N(3)-methyl-2'-deoxycytidine in single-stranded DNA + 2-oxoglutarate + O2 = a 2'-deoxycytidine in single-stranded DNA + formaldehyde + succinate + CO2 + H(+). The enzyme catalyses a 3,N(4)-etheno-2'-deoxycytidine in single-stranded DNA + 2-oxoglutarate + O2 + H2O = a 2'-deoxycytidine in single-stranded DNA + glyoxal + succinate + CO2. With respect to regulation, activated by ascorbate. Functionally, dioxygenase that mediates demethylation of DNA and RNA containing 1-methyladenosine (m1A). Repairs alkylated DNA containing 1-methyladenosine (m1A) and 3-methylcytosine (m3C) by oxidative demethylation. Has a strong preference for single-stranded DNA. Able to process alkylated m3C within double-stranded regions via its interaction with ASCC3, which promotes DNA unwinding to generate single-stranded substrate needed for ALKBH3. Can repair exocyclic 3,N4-ethenocytosine adducs in single-stranded DNA. Also acts on RNA. Demethylates N(1)-methyladenosine (m1A) RNA, an epigenetic internal modification of messenger RNAs (mRNAs) highly enriched within 5'-untranslated regions (UTRs) and in the vicinity of start codons. Requires molecular oxygen, alpha-ketoglutarate and iron. In Bos taurus (Bovine), this protein is Alpha-ketoglutarate-dependent dioxygenase alkB homolog 3.